We begin with the raw amino-acid sequence, 372 residues long: Alpha-L-fucosidase 3 (372 aa).

A signal peptide spans M1–A23. S37 (nucleophile) is an active-site residue. N-linked (GlcNAc...) asparagine glycans are attached at residues N96, N114, N139, and N182. Catalysis depends on residues D345 and H348.

The protein belongs to the 'GDSL' lipolytic enzyme family. High expression in younger leaves and in the apical region of the inflorescence stem.

It is found in the secreted. It localises to the extracellular space. The protein localises to the apoplast. It catalyses the reaction an alpha-L-fucoside + H2O = L-fucose + an alcohol. Hydrolyzes alpha-1,2-linked fucose. Also active on fucosylated xyloglucan oligosaccharides. The sequence is that of Alpha-L-fucosidase 3 (FXG1) from Arabidopsis thaliana (Mouse-ear cress).